An 86-amino-acid polypeptide reads, in one-letter code: Weak toxin 2 (86 aa).

Positions 1–23 (MKTLLLTLVVVAIVCLDLGYTLT) are cleaved as a signal peptide. Cystine bridges form between Cys24–Cys45, Cys27–Cys32, Cys38–Cys63, Cys67–Cys78, and Cys79–Cys84.

This sequence belongs to the three-finger toxin family. Ancestral subfamily. Orphan group II sub-subfamily. As to expression, expressed by the venom gland.

Its subcellular location is the secreted. In terms of biological role, binds with low affinity to muscular (alpha-1-beta-1-delta-epsilon/CHRNA1-CHRNB1-CHRND-CHRNE) and very low affinity to neuronal (alpha-7/CHRNA7) nicotinic acetylcholine receptor (nAChR). The chain is Weak toxin 2 from Bungarus candidus (Malayan krait).